We begin with the raw amino-acid sequence, 156 residues long: Small ribosomal subunit protein uS7 (156 aa).

The protein belongs to the universal ribosomal protein uS7 family. In terms of assembly, part of the 30S ribosomal subunit. Contacts proteins S9 and S11.

One of the primary rRNA binding proteins, it binds directly to 16S rRNA where it nucleates assembly of the head domain of the 30S subunit. Is located at the subunit interface close to the decoding center, probably blocks exit of the E-site tRNA. The polypeptide is Small ribosomal subunit protein uS7 (Synechococcus sp. (strain CC9902)).